The sequence spans 530 residues: Ubiquitin carboxyl-terminal hydrolase 17-like protein 24 (530 aa).

One can recognise a USP domain in the interval 80-375 (AGLQNMGNTC…QAYVLFYIQK (296 aa)). Cys89 acts as the Nucleophile in catalysis. His334 functions as the Proton acceptor in the catalytic mechanism. 2 stretches are compositionally biased toward basic and acidic residues: residues 382 to 392 (SESVSRGREPR) and 398 to 412 (DTDRRATQGELKRDH). Disordered regions lie at residues 382 to 412 (SESVSRGREPRALGAEDTDRRATQGELKRDH) and 477 to 530 (NHHP…LVCQ). Polar residues predominate over residues 493 to 505 (TPTHQESMNTGTL). The span at 510–524 (GRARRSKGKNKHSKR) shows a compositional bias: basic residues.

The protein belongs to the peptidase C19 family. USP17 subfamily. As to expression, expressed in heart, brain, liver and skeletal muscle.

The protein resides in the nucleus. Its subcellular location is the nucleolus. The protein localises to the endoplasmic reticulum. It catalyses the reaction Thiol-dependent hydrolysis of ester, thioester, amide, peptide and isopeptide bonds formed by the C-terminal Gly of ubiquitin (a 76-residue protein attached to proteins as an intracellular targeting signal).. Functionally, deubiquitinating enzyme that removes conjugated ubiquitin from specific proteins to regulate different cellular processes that may include cell proliferation, progression through the cell cycle, apoptosis, cell migration, and the cellular response to viral infection. The polypeptide is Ubiquitin carboxyl-terminal hydrolase 17-like protein 24 (USP17L24) (Homo sapiens (Human)).